Consider the following 853-residue polypeptide: Lysine-specific histone demethylase 1A (853 aa).

The segment at 1–177 (MLSGKKAAAA…EPEEPSGVEG (177 aa)) is disordered. The segment covering 7–26 (AAAAAAAAAAAAAAGTEAGS) has biased composition (low complexity). T60 carries the phosphothreonine modification. The segment covering 76 to 97 (AEPPGSAGPQAGPTAGPGSATP) has biased composition (low complexity). T105 carries the phosphothreonine modification. Residues 111 to 152 (TSRRKRAKVEYREMDESLANLSEDEYYSEEERNAKAEKEKKL) are a coiled coil. Phosphoserine occurs at positions 127 and 132. Y136 is modified (phosphotyrosine). Residue S138 is modified to Phosphoserine. The span at 139–152 (EEERNAKAEKEKKL) shows a compositional bias: basic and acidic residues. Residues 161–173 (PEEENESEPEEPS) are compositionally biased toward acidic residues. At S167 the chain carries Phosphoserine. The SWIRM domain occupies 175-274 (VEGAAFQSRL…FGIYKRIKPL (100 aa)). FAD-binding positions include S290, E309, R311, R317, and 333-334 (MV). The demethylase activity stretch occupies residues 301–853 (FGMDVTLLEA…GVPAQQSPSM (553 aa)). Residues 429 to 515 (IEHWKKIVKT…EEKLQELEAN (87 aa)) adopt a coiled-coil conformation. 3 positions are modified to N6-acetyllysine: K433, K434, and K437. Glycyl lysine isopeptide (Lys-Gly) (interchain with G-Cter in SUMO2) cross-links involve residues K443 and K470. K504 participates in a covalent cross-link: Glycyl lysine isopeptide (Lys-Gly) (interchain with G-Cter in ubiquitin). Position 612 is a phosphoserine (S612). FAD is bound by residues E802 and 811-812 (TV). The residue at position 850 (S850) is a Phosphoserine.

Belongs to the flavin monoamine oxidase family. Component of a histone demethylase complex with RCOR1. Component of a BHC histone deacetylase complex that contains HDAC1, HDAC2, HMG20B, KDM1A, RCOR1 and PHF21A. The BHC complex may also contain ZMYM2, ZNF217, ZMYM3, GSE1 and GTF2I. In the complex, RCOR1 strongly enhances the demethylase activity and protects it from the proteasome while PHF21A inhibits the demethylase activity. Interacts with the androgen receptor (AR). Component of a RCOR/GFI/KDM1A/HDAC complex. Interacts directly with GFI1 and GFI1B. Interacts with SNAI1 (via SNAG domain). Interacts with INSM1. Interacts (via AOD/Tower domain) with JADE2 (via C-terminus). Interacts with ESRRB; co-occupes the core set of ESRRB targets. Interacts with SAMD1 (via WH domain); the interaction modulates KDM1A function. Interacts with RBPJ. Interacts with L3MBTL3. Interacts with ZMYND8. FAD is required as a cofactor. Acetylated by KAT8 in epithelial but not in mesenchymal cells, thereby regulating the epithelial-to-mesenchymal transition. Acetylation by KAT8 reduces KDM1A association with nucleosomes, thereby decreasing histone H3 demethylation, leading to transcription activatio of target genes. In terms of processing, polyubiquitinated by JADE2; which leads to its proteasomal degradation. Deubiquitinated by USP38; preventing it from degradation by the 26S proteasome. Ubiquitously expressed.

It is found in the nucleus. The protein localises to the chromosome. It carries out the reaction N(6),N(6)-dimethyl-L-lysyl(4)-[histone H3] + 2 A + 2 H2O = L-lysyl(4)-[histone H3] + 2 formaldehyde + 2 AH2. With respect to regulation, the N-terminal sequences of INSM1 and SNAI1 compete with histone H3 for the same binding site and thereby inhibit histone demethylation (in vitro). Its function is as follows. Histone demethylase that can demethylate both 'Lys-4' (H3K4me) and 'Lys-9' (H3K9me) of histone H3, thereby acting as a coactivator or a corepressor, depending on the context. Acts by oxidizing the substrate by FAD to generate the corresponding imine that is subsequently hydrolyzed. Acts as a corepressor by mediating demethylation of H3K4me, a specific tag for epigenetic transcriptional activation. Demethylates both mono- (H3K4me1) and di-methylated (H3K4me2) H3K4me. May play a role in the repression of neuronal genes. Alone, it is unable to demethylate H3K4me on nucleosomes and requires the presence of RCOR1/CoREST to achieve such activity. Also acts as a coactivator of androgen receptor (ANDR)-dependent transcription, by being recruited to ANDR target genes and mediating demethylation of H3K9me, a specific tag for epigenetic transcriptional repression. The presence of PRKCB in ANDR-containing complexes, which mediates phosphorylation of 'Thr-6' of histone H3 (H3T6ph), a specific tag that prevents demethylation H3K4me, prevents H3K4me demethylase activity of KDM1A. Demethylates di-methylated 'Lys-370' of p53/TP53 which prevents interaction of p53/TP53 with TP53BP1 and represses p53/TP53-mediated transcriptional activation. Demethylates and stabilizes the DNA methylase DNMT1. Demethylates methylated 'Lys-44' and methylated 'Lys-119' of SOX2. Required for gastrulation during embryogenesis. Component of a RCOR/GFI/KDM1A/HDAC complex that suppresses, via histone deacetylase (HDAC) recruitment, a number of genes implicated in multilineage blood cell development. Facilitates epithelial-to-mesenchymal transition by acting as an effector of SNAI1-mediated transcription repression of epithelial markers E-cadherin/CDH1, CDN7 and KRT8. Required for the maintenance of the silenced state of the SNAI1 target genes E-cadherin/CDH1 and CDN7. Required for the repression of GIPR expression. The protein is Lysine-specific histone demethylase 1A of Mus musculus (Mouse).